A 197-amino-acid chain; its full sequence is Imidazoleglycerol-phosphate dehydratase (197 aa).

The protein belongs to the imidazoleglycerol-phosphate dehydratase family.

Its subcellular location is the cytoplasm. It catalyses the reaction D-erythro-1-(imidazol-4-yl)glycerol 3-phosphate = 3-(imidazol-4-yl)-2-oxopropyl phosphate + H2O. It participates in amino-acid biosynthesis; L-histidine biosynthesis; L-histidine from 5-phospho-alpha-D-ribose 1-diphosphate: step 6/9. The polypeptide is Imidazoleglycerol-phosphate dehydratase (Thioalkalivibrio sulfidiphilus (strain HL-EbGR7)).